A 1162-amino-acid chain; its full sequence is ATP-dependent helicase/deoxyribonuclease subunit B (1162 aa).

Residues 1-275 (MELNAYIGRA…QFFKQQYRFN (275 aa)) form the UvrD-like helicase ATP-binding domain. 8–15 (GRAGTGKS) lines the ATP pocket. The 315-residue stretch at 269-583 (KQQYRFNNKD…SIGTMDLAKV (315 aa)) folds into the UvrD-like helicase C-terminal domain. The [4Fe-4S] cluster site is built by C784, C1117, C1120, and C1126.

The protein belongs to the helicase family. AddB/RexB type 1 subfamily. As to quaternary structure, heterodimer of AddA and AddB. Requires Mg(2+) as cofactor. The cofactor is [4Fe-4S] cluster.

The heterodimer acts as both an ATP-dependent DNA helicase and an ATP-dependent, dual-direction single-stranded exonuclease. Recognizes the chi site generating a DNA molecule suitable for the initiation of homologous recombination. The AddB subunit has 5' -&gt; 3' nuclease activity but not helicase activity. This is ATP-dependent helicase/deoxyribonuclease subunit B from Staphylococcus haemolyticus (strain JCSC1435).